Consider the following 216-residue polypeptide: MQAKTLHIRHLGNQDYETVWHAMQHYTDNRDENSPDELWLVEHPPVFTQGQAGKAEHILNPGDIPVIQVDRGGQVTYHGPGQLVAYPLLDIKRLKIGVRQLVTHIEQSIVDMLKPYGVQAYAKADAPGVYVDERKVASLGLRIRRGCSFHGLALNVDMDISPFQRINPCGYAGLEMVQCKALGGPNTVNEAGEKLTLTFSQLLGYEHLVHHQGLAE.

One can recognise a BPL/LPL catalytic domain in the interval 32-207 (ENSPDELWLV…TFSQLLGYEH (176 aa)). Substrate-binding positions include 71 to 78 (RGGQVTYH), 138 to 140 (SLG), and 151 to 153 (GLA). C169 functions as the Acyl-thioester intermediate in the catalytic mechanism.

The protein belongs to the LipB family.

It localises to the cytoplasm. It carries out the reaction octanoyl-[ACP] + L-lysyl-[protein] = N(6)-octanoyl-L-lysyl-[protein] + holo-[ACP] + H(+). It participates in protein modification; protein lipoylation via endogenous pathway; protein N(6)-(lipoyl)lysine from octanoyl-[acyl-carrier-protein]: step 1/2. Catalyzes the transfer of endogenously produced octanoic acid from octanoyl-acyl-carrier-protein onto the lipoyl domains of lipoate-dependent enzymes. Lipoyl-ACP can also act as a substrate although octanoyl-ACP is likely to be the physiological substrate. The sequence is that of Octanoyltransferase from Shewanella amazonensis (strain ATCC BAA-1098 / SB2B).